The primary structure comprises 357 residues: Peptide chain release factor 1 (357 aa).

Q234 is modified (N5-methylglutamine).

This sequence belongs to the prokaryotic/mitochondrial release factor family. Methylated by PrmC. Methylation increases the termination efficiency of RF1.

The protein localises to the cytoplasm. Peptide chain release factor 1 directs the termination of translation in response to the peptide chain termination codons UAG and UAA. The polypeptide is Peptide chain release factor 1 (Arthrobacter sp. (strain FB24)).